Consider the following 513-residue polypeptide: uncharacterized protein (513 aa).

Disordered regions lie at residues 72-113 (GVVP…TGQF) and 155-262 (IMGG…NPRF). Over residues 82-106 (ANRTANPNTNSNPNPNATNAQPNPT) the composition is skewed to low complexity. 2 stretches are compositionally biased toward polar residues: residues 164–189 (EANS…QTQG) and 210–228 (TPLN…EFQQ). Low complexity predominate over residues 229-238 (TTSPIFSSSS). Over residues 239–248 (TPPPPPPRPS) the composition is skewed to pro residues. The segment covering 253 to 262 (GESQNTNPRF) has biased composition (polar residues). The RING-type; atypical zinc-finger motif lies at 396–437 (CTICMEMFKINDDVIQLPCKHYFHENCIKPWLRVNGTCAICR). The tract at residues 439–513 (PVDPNSQQRN…DDFVDEEPLE (75 aa)) is disordered. The segment covering 442–493 (PNSQQRNNTSTDSANGHNPSNHANPSTSTTNDQGATLRNESFNAASQSNLSS) has biased composition (polar residues).

This is an uncharacterized protein from Schizosaccharomyces pombe (strain 972 / ATCC 24843) (Fission yeast).